A 789-amino-acid polypeptide reads, in one-letter code: Bifunctional purine biosynthetic protein PUR2,5 (789 aa).

The interval 1–428 is GARS; it reads MEKINVLVVG…NRTDIAHRAF (428 aa). One can recognise an ATP-grasp domain in the interval 114-321; that stretch reads KDFMKKHNIP…LLELMLATVE (208 aa). Residue 140 to 201 coordinates ATP; the sequence is IANSSHNLVI…EEFLEGDELS (62 aa). The Mg(2+) site is built by E291 and N293. Residues 438-773 are AIRS; that stretch reads LTYEDAGVSV…TVYTIGKLVE (336 aa).

In the N-terminal section; belongs to the GARS family. The protein in the C-terminal section; belongs to the AIR synthase family. Mg(2+) serves as cofactor. The cofactor is Mn(2+).

The protein resides in the cytoplasm. It localises to the cytosol. It carries out the reaction 2-formamido-N(1)-(5-O-phospho-beta-D-ribosyl)acetamidine + ATP = 5-amino-1-(5-phospho-beta-D-ribosyl)imidazole + ADP + phosphate + H(+). It catalyses the reaction 5-phospho-beta-D-ribosylamine + glycine + ATP = N(1)-(5-phospho-beta-D-ribosyl)glycinamide + ADP + phosphate + H(+). The protein operates within purine metabolism; IMP biosynthesis via de novo pathway; 5-amino-1-(5-phospho-D-ribosyl)imidazole from N(2)-formyl-N(1)-(5-phospho-D-ribosyl)glycinamide: step 2/2. Its pathway is purine metabolism; IMP biosynthesis via de novo pathway; N(1)-(5-phospho-D-ribosyl)glycinamide from 5-phospho-alpha-D-ribose 1-diphosphate: step 2/2. Functionally, catalyzes the second and fifth step in the 'de novo' purine biosynthesis pathway; contains phosphoribosylamine--glycine ligase (GARS) and phosphoribosylformylglycinamidine cyclo-ligase (AIRS) activities. The chain is Bifunctional purine biosynthetic protein PUR2,5 from Pichia angusta (Yeast).